The primary structure comprises 465 residues: Tapasin (465 aa).

The signal sequence occupies residues 1–23 (MKPLLLLVAVALGLATVVSVVSA). Over 24 to 416 (GPEAIECWFV…GFSGPSIEDG (393 aa)) the chain is Lumenal. Residues cysteine 30 and cysteine 94 are joined by a disulfide bond. Residue asparagine 256 is glycosylated (N-linked (GlcNAc...) asparagine). The region spanning 295 to 402 (PRVSLTPAPV…PASGRSADVT (108 aa)) is the Ig-like C1-type domain. An intrachain disulfide couples cysteine 318 to cysteine 385. A helical membrane pass occupies residues 417–437 (IGLFLSAFLLLGLLKVLGWLA). Residues 438-465 (AYWTIPEVSKEKATAASLTIPRNSKKSQ) are Cytoplasmic-facing.

Heterodimer with PDIA3; disulfide-linked. Obligatory mediator for the interaction between newly assembled MHC class I molecules, calreticulin, PDIA3 and TAP. Up to 4 MHC class I/tapasin complexes bind to 1 TAP. Interacts with HLA-G-B2M complex; this interaction is required for loading of high affinity peptides. On its own or as part of MHC class I peptide loading complex, interacts with ligand-free MR1 or MR1-B2M complex, providing for stable MR1 pools ready for metabolite antigen processing.

Its subcellular location is the endoplasmic reticulum membrane. Functionally, involved in the association of MHC class I with transporter associated with antigen processing (TAP) and in the assembly of MHC class I with peptide (peptide loading). The chain is Tapasin (Tapbp) from Mus musculus (Mouse).